The following is a 563-amino-acid chain: Cystathionine gamma-synthase 1, chloroplastic (563 aa).

The N-terminal 68 residues, 1–68, are a transit peptide targeting the chloroplast; the sequence is MAVSSFQCPT…SRILRFPPNF (68 aa). The pyridoxal 5'-phosphate site is built by tyrosine 226, arginine 228, glycine 256, methionine 257, tyrosine 281, serine 376, and threonine 378. An N6-(pyridoxal phosphate)lysine modification is found at lysine 379.

The protein belongs to the trans-sulfuration enzymes family. It depends on pyridoxal 5'-phosphate as a cofactor.

The protein resides in the plastid. It is found in the chloroplast. It carries out the reaction O-phospho-L-homoserine + L-cysteine = L,L-cystathionine + phosphate. The enzyme catalyses O-succinyl-L-homoserine + L-cysteine = L,L-cystathionine + succinate + H(+). The protein operates within amino-acid biosynthesis; L-methionine biosynthesis via de novo pathway; L-cystathionine from O-succinyl-L-homoserine: step 1/1. With respect to regulation, inhibited by propargylglycine. Its function is as follows. Catalyzes the first committed step of methionine (Met) biosynthesis. Catalyzes the formation of L-cystathionine from homoserine esters and L-cysteine, via a gamma-replacement reaction. Substrate preference for cystathionine synthesis is O-phospho-L-homoserine (OPH) &gt; O(4)-succinyl-L-homoserine (OSH) &gt;&gt; O-acetyl-L-homoserine (OAH). Is able, at extremely low rate, to catalyze a gamma-elimination of OPH in the absence of cysteine to produce inorganic phosphate (Pi), 2-oxobutanoate and ammonia. The protein is Cystathionine gamma-synthase 1, chloroplastic of Arabidopsis thaliana (Mouse-ear cress).